Consider the following 287-residue polypeptide: Glucose uptake protein GlcU (287 aa).

8 helical membrane-spanning segments follow: residues 4–26, 38–60, 110–132, 153–175, 180–197, 210–227, 232–254, and 261–283; these read LLAL…LGGG, ALIV…IFIV, WSTP…GIIL, ILIL…LFNV, ALLP…VLTY, ILPG…FISQ, VATS…IFIL, and RQLI…LGIA.

The protein belongs to the GRP transporter (TC 2.A.7.5) family.

It is found in the cell membrane. Its function is as follows. Involved in the uptake of glucose. In Bacillus subtilis (strain 168), this protein is Glucose uptake protein GlcU (glcU).